Reading from the N-terminus, the 118-residue chain is Large ribosomal subunit protein bL20 (118 aa).

This sequence belongs to the bacterial ribosomal protein bL20 family.

Functionally, binds directly to 23S ribosomal RNA and is necessary for the in vitro assembly process of the 50S ribosomal subunit. It is not involved in the protein synthesizing functions of that subunit. This is Large ribosomal subunit protein bL20 from Alteromonas mediterranea (strain DSM 17117 / CIP 110805 / LMG 28347 / Deep ecotype).